The primary structure comprises 174 residues: MAFRQPNTKELKVIRKALSYYGSGDFLSHYALLVKEGEKKEVYGVSKELYGVIGELNPHYAGVKIGEVGRRFRFSLEGTFWLLRNSRNRVWVNERGEMLFLYGRDIFAGSVERASEFGENSIVFVCNRFDDVLGIGRSRHSSDELSNLPEDKVFVENLVDRGEYLRHQKTYLSF.

In terms of domain architecture, PUA spans 87-161; it reads RNRVWVNERG…KVFVENLVDR (75 aa).

The protein belongs to the UPF0113 family.

This is UPF0113 protein AF_0058 from Archaeoglobus fulgidus (strain ATCC 49558 / DSM 4304 / JCM 9628 / NBRC 100126 / VC-16).